Here is a 232-residue protein sequence, read N- to C-terminus: Phosphatidylserine decarboxylase proenzyme (232 aa).

The active-site Schiff-base intermediate with substrate; via pyruvic acid is the S190. A Pyruvic acid (Ser); by autocatalysis modification is found at S190.

This sequence belongs to the phosphatidylserine decarboxylase family. PSD-A subfamily. As to quaternary structure, heterodimer of a large membrane-associated beta subunit and a small pyruvoyl-containing alpha subunit. It depends on pyruvate as a cofactor. Post-translationally, is synthesized initially as an inactive proenzyme. Formation of the active enzyme involves a self-maturation process in which the active site pyruvoyl group is generated from an internal serine residue via an autocatalytic post-translational modification. Two non-identical subunits are generated from the proenzyme in this reaction, and the pyruvate is formed at the N-terminus of the alpha chain, which is derived from the carboxyl end of the proenzyme. The post-translation cleavage follows an unusual pathway, termed non-hydrolytic serinolysis, in which the side chain hydroxyl group of the serine supplies its oxygen atom to form the C-terminus of the beta chain, while the remainder of the serine residue undergoes an oxidative deamination to produce ammonia and the pyruvoyl prosthetic group on the alpha chain.

Its subcellular location is the cell membrane. It carries out the reaction a 1,2-diacyl-sn-glycero-3-phospho-L-serine + H(+) = a 1,2-diacyl-sn-glycero-3-phosphoethanolamine + CO2. It functions in the pathway phospholipid metabolism; phosphatidylethanolamine biosynthesis; phosphatidylethanolamine from CDP-diacylglycerol: step 2/2. Its function is as follows. Catalyzes the formation of phosphatidylethanolamine (PtdEtn) from phosphatidylserine (PtdSer). This Sinorhizobium medicae (strain WSM419) (Ensifer medicae) protein is Phosphatidylserine decarboxylase proenzyme.